The primary structure comprises 207 residues: Inhibitor of hydrogen peroxide resistance (207 aa).

Residues 163 to 182 (MNYIHQRTRISRSVVAEVLA) constitute a DNA-binding region (H-T-H motif).

Belongs to the IprA family.

Its function is as follows. Involved in oxidative stress resistance. This is Inhibitor of hydrogen peroxide resistance from Escherichia coli O157:H7.